The sequence spans 422 residues: Proline-rich protein 22 (422 aa).

Disordered stretches follow at residues 1–35 (MQHPKPFCAPAAPQEGFSPQSLEGAEVLGNQPAPT), 306–325 (LCEVPGPALPDSSGGNSADD), and 363–422 (EEQP…ATPH). Over residues 383–400 (GKRKASTAKKGKPGRKAR) the composition is skewed to basic residues. A compositionally biased stretch (basic and acidic residues) spans 413–422 (PREDLGATPH).

This is Proline-rich protein 22 (PRR22) from Homo sapiens (Human).